The chain runs to 453 residues: Protein ECM18 (453 aa).

Residues leucine 130–proline 435 enclose the AB hydrolase-1 domain. Residues histidine 428 to aspartate 433 carry the HXXXXD motif motif.

It belongs to the peptidase S33 family. ABHD4/ABHD5 subfamily.

It is found in the mitochondrion. Its function is as follows. May be involved in cell wall organization and biogenesis. The protein is Protein ECM18 (ECM18) of Saccharomyces cerevisiae (strain ATCC 204508 / S288c) (Baker's yeast).